A 267-amino-acid chain; its full sequence is Cell division control protein 11 (267 aa).

In terms of domain architecture, Septin-type G spans 6-263 (QNRRFTIMAA…ENYRAAVLEG (258 aa)). Residues 16–23 (GPRGSGKS) are G1 motif. Residues 16–23 (GPRGSGKS), Gly66, 146–154 (KSDGLSITE), and Arg212 contribute to the GTP site. A G3 motif region spans residues 63–66 (DTPG). The tract at residues 145-148 (SKSD) is G4 motif.

It belongs to the TRAFAC class TrmE-Era-EngA-EngB-Septin-like GTPase superfamily. Septin GTPase family. Component of the septin complex.

In terms of biological role, septins are GTPases involved in cytokinesis. The septins localize to the site of cleavage and act as a structural scaffold that recruits different components involved in diverse processes at specific stages during the cell cycle. Septins are also involved in cell morphogenesis, chitin deposition, cell cycle regulation, cell compartmentalization and spore wall formation. This chain is Cell division control protein 11 (CDC11), found in Encephalitozoon cuniculi (strain GB-M1) (Microsporidian parasite).